We begin with the raw amino-acid sequence, 461 residues long: UPF0053 protein YhdT (461 aa).

One can recognise a CNNM transmembrane domain in the interval 1–202 (MDDIDSLILI…LKNGEINPSE (202 aa)). 3 helical membrane-spanning segments follow: residues 8 to 28 (ILIGVLIALTAFFVASEFAIV), 103 to 123 (VSFAVAYGLITFLHVVVGELA), and 137 to 157 (LLIAGPLRLFYLLLFPFIWIL). CBS domains follow at residues 221 to 280 (MIPR…MTEE) and 290 to 347 (YVRP…IRDE).

This sequence belongs to the UPF0053 family.

Its subcellular location is the cell membrane. The protein is UPF0053 protein YhdT (yhdT) of Bacillus subtilis (strain 168).